Here is a 454-residue protein sequence, read N- to C-terminus: UDP-N-acetylmuramoylalanine--D-glutamate ligase (454 aa).

115–121 (GTNGKTT) serves as a coordination point for ATP.

The protein belongs to the MurCDEF family.

It is found in the cytoplasm. It carries out the reaction UDP-N-acetyl-alpha-D-muramoyl-L-alanine + D-glutamate + ATP = UDP-N-acetyl-alpha-D-muramoyl-L-alanyl-D-glutamate + ADP + phosphate + H(+). The protein operates within cell wall biogenesis; peptidoglycan biosynthesis. Cell wall formation. Catalyzes the addition of glutamate to the nucleotide precursor UDP-N-acetylmuramoyl-L-alanine (UMA). The protein is UDP-N-acetylmuramoylalanine--D-glutamate ligase of Thermoanaerobacter pseudethanolicus (strain ATCC 33223 / 39E) (Clostridium thermohydrosulfuricum).